The following is a 171-amino-acid chain: Large ribosomal subunit protein uL10 (171 aa).

This sequence belongs to the universal ribosomal protein uL10 family. In terms of assembly, part of the ribosomal stalk of the 50S ribosomal subunit. The N-terminus interacts with L11 and the large rRNA to form the base of the stalk. The C-terminus forms an elongated spine to which L12 dimers bind in a sequential fashion forming a multimeric L10(L12)X complex.

Forms part of the ribosomal stalk, playing a central role in the interaction of the ribosome with GTP-bound translation factors. This chain is Large ribosomal subunit protein uL10, found in Zymomonas mobilis subsp. mobilis (strain ATCC 31821 / ZM4 / CP4).